Here is a 166-residue protein sequence, read N- to C-terminus: Spiderine-1b (166 aa).

The first 18 residues, 1-18 (MKFALVLLGICAFYLVNA), serve as a signal peptide directing secretion. Residues 19 to 58 (TGDLETELEASELQELQEALDLIGETSLESLEAEELEEAR) constitute a propeptide, removed in mature form. The tract at residues 59-99 (KFKWGKLFSAAKKLYKKGKKLSKNKNFKKALKFGKQLAKNL) is linear cationic cytotoxin domain. The Oxytoxin-type inhibitor cystine knot (ICK) domain occupies 113–166 (NNKCWAIGTTCSDDCDCCPEHHCHCPAGKWLPGLFRCTCQVTESDKVNKCPPAE). 5 disulfide bridges follow: C116–C130, C123–C135, C127–C162, C129–C151, and C137–C149.

Belongs to the spiderine family. Cationic/spiderine subfamily. Expressed by the venom gland.

The protein resides in the secreted. Its function is as follows. Has antimicrobial, insecticidal, cytolytic and cytotoxic activity. The polypeptide is Spiderine-1b (Oxyopes takobius (Lynx spider)).